Reading from the N-terminus, the 400-residue chain is Diphosphomevalonate decarboxylase (400 aa).

N-acetylalanine is present on Ala2. (R)-5-diphosphomevalonate-binding positions include 23-26 and Arg78; that span reads YWGK. The residue at position 96 (Ser96) is a Phosphoserine. (R)-5-diphosphomevalonate is bound by residues 156-161 and Thr212; that span reads SGSACR.

It belongs to the diphosphomevalonate decarboxylase family. Homodimer. In terms of tissue distribution, expressed in heart, skeletal muscle, lung, liver, brain, pancreas, kidney and placenta.

The protein localises to the cytoplasm. The catalysed reaction is (R)-5-diphosphomevalonate + ATP = isopentenyl diphosphate + ADP + phosphate + CO2. It participates in steroid biosynthesis; cholesterol biosynthesis. Functionally, catalyzes the ATP dependent decarboxylation of (R)-5-diphosphomevalonate to form isopentenyl diphosphate (IPP). Functions in the mevalonate (MVA) pathway leading to isopentenyl diphosphate (IPP), a key precursor for the biosynthesis of isoprenoids and sterol synthesis. This is Diphosphomevalonate decarboxylase (MVD) from Homo sapiens (Human).